The following is a 718-amino-acid chain: Telomeric repeat-binding factor 2 (718 aa).

Disordered stretches follow at residues 1 to 22 and 219 to 286; these read MAAKRSRAAMEEQEKTSTRSDD and NSER…GAPE. Basic and acidic residues-rich tracts occupy residues 8–22 and 219–228; these read AAMEEQEKTSTRSDD and NSERAEEPKR. The interval 24–220 is TRFH dimerization; the sequence is EQAVNRWVLQ…LVTMMKSLNS (197 aa). A run of 15 repeats spans residues 257–269, 270–282, 283–295, 296–308, 309–321, 322–334, 335–347, 348–360, 361–373, 374–386, 387–399, 400–412, 413–425, 426–438, and 439–451. Residues 257–451 are 15 X 13 AA approximate tandem repeats; it reads GTLRRAETAG…EPMKSASYPT (195 aa). 2 disordered regions span residues 342 to 455 and 524 to 641; these read TARD…ASQP and FNKL…WSDE. Basic and acidic residues predominate over residues 405 to 425; the sequence is AERRKDLVRAPKRAETARDVV. A compositionally biased stretch (polar residues) spans 533–543; the sequence is PSPQQMSPSVS. The Nuclear localization signal signature appears at 545-550; that stretch reads RTKRRK. Residues 584–595 show a composition bias toward low complexity; sequence SQCSKSSESPDS. Over residues 615–630 the composition is skewed to polar residues; that stretch reads PVSTKRSSQQRWNSSY. Residues 664 to 717 form the HTH myb-type domain; it reads KKQKWTVQESEWIKDGVRKYGEGRWKTISEKYPFQNRTSVQIKDRYRTMKKLGI. Residues 688–713 constitute a DNA-binding region (H-T-H motif); the sequence is WKTISEKYPFQNRTSVQIKDRYRTMK.

In terms of assembly, homodimer. Component of the shelterin complex (telosome). Interacts with TERF2IP/RAP1. Highly expressed in embryo.

Its subcellular location is the nucleus. The protein resides in the chromosome. It is found in the telomere. In terms of biological role, binds the telomeric double-stranded 5'-TTAGGG-3' repeat and plays a central role in telomere maintenance and protection against end-to-end fusion of chromosomes. In addition to its telomeric DNA-binding role, required to recruit a number of factors and enzymes required for telomere protection, including the shelterin complex, TERF2IP/RAP1 and DCLRE1B/Apollo. Component of the shelterin complex (telosome) that is involved in the regulation of telomere length and protection. Shelterin associates with arrays of double-stranded 5'-TTAGGG-3' repeats added by telomerase and protects chromosome ends; without its protective activity, telomeres are no longer hidden from the DNA damage surveillance and chromosome ends are inappropriately processed by DNA repair pathways. Together with DCLRE1B/Apollo, plays a key role in telomeric loop (T loop) formation by generating 3' single-stranded overhang at the leading end telomeres: T loops have been proposed to protect chromosome ends from degradation and repair. Required both to recruit DCLRE1B/Apollo to telomeres and activate the exonuclease activity of DCLRE1B/Apollo. Together with DCLRE1B/Apollo, required to control the amount of DNA topoisomerase (TOP1, TOP2A and TOP2B) needed for telomere replication during fork passage and prevent aberrant telomere topology. Recruits TERF2IP/RAP1 to telomeres, thereby participating in to repressing homology-directed repair (HDR), which can affect telomere length. This chain is Telomeric repeat-binding factor 2 (TERF2), found in Gallus gallus (Chicken).